Consider the following 601-residue polypeptide: MTHKTFPSWPDVAPQLIETAAGRSPADTVIRNGKWVNVHTREVLEGHDIAIKAGRIAYVGPDASYCTGPETEVIDAEGRYMMPGLCDGHMHIESGMLTPAEFARAVIPHGTTTMFTDPHEIANVLGLEGVRLMHDEALLQPVNIYTQMPSCAPSAPGLETTGYEISAEDVAEAMTWPGIIGLGEMMNFPGVAHGDPKMLAEIAATQRSGKTVGGHYASPDLGPDFAAYVAGGPADDHEGTCEADAITRMRQGMRAMVRLGSAWYDVEAQITAITEKGLDPRNFILCTDDCHSGTLVNEGHMNRAVRHAIDCGCDPLIAIQMATINTATHFGLEREIGSITPGRRADIILTSDLKTLPIEVVIARGQIVAESGSIKVECPHLDWPESARGTVHLGHTLAATDFELAAPEGANAVTANVIGVVENQAPTKALKAELPVRDGLVEGEGDVCQIALVERHRATGGVTNAFVSGFGYEGKMAMASTVAHDSHHMIVVGTDRTQMALAANRLAEVGGGITIFRDGAELALVELPIAGLMSDSPASEVAANAQKLVEAMQACGCTLNNAYMQHSLLALVVIPELRISDLGLVDVRSFKKIPVIEPFNE.

This sequence belongs to the metallo-dependent hydrolases superfamily. Adenine deaminase family. The cofactor is Mn(2+).

It carries out the reaction adenine + H2O + H(+) = hypoxanthine + NH4(+). In Ruegeria sp. (strain TM1040) (Silicibacter sp.), this protein is Adenine deaminase.